Consider the following 122-residue polypeptide: Glucagon-2 (122 aa).

An N-terminal signal peptide occupies residues 1 to 21 (MTSLHSLAGLLLLMIIQSSWQ). Propeptides lie at residues 83 to 86 (NGLF) and E122.

This sequence belongs to the glucagon family.

Its subcellular location is the secreted. In terms of biological role, promotes hydrolysis of glycogen and lipids, and raises the blood sugar level. The protein is Glucagon-2 (gcg2) of Lophius americanus (American angler).